Here is a 127-residue protein sequence, read N- to C-terminus: Large ribosomal subunit protein bL17 (127 aa).

It belongs to the bacterial ribosomal protein bL17 family. Part of the 50S ribosomal subunit. Contacts protein L32.

This Actinobacillus pleuropneumoniae serotype 7 (strain AP76) protein is Large ribosomal subunit protein bL17.